The following is a 440-amino-acid chain: Probable D-serine dehydratase (440 aa).

Lys-120 carries the post-translational modification N6-(pyridoxal phosphate)lysine.

Belongs to the serine/threonine dehydratase family. DsdA subfamily. The cofactor is pyridoxal 5'-phosphate.

It carries out the reaction D-serine = pyruvate + NH4(+). In Shouchella clausii (strain KSM-K16) (Alkalihalobacillus clausii), this protein is Probable D-serine dehydratase.